A 311-amino-acid chain; its full sequence is Protein MGF 360-16R (311 aa).

This sequence belongs to the asfivirus MGF 360 family.

Functionally, plays a role in virus cell tropism, and may be required for efficient virus replication in macrophages. The chain is Protein MGF 360-16R from African swine fever virus (strain Badajoz 1971 Vero-adapted) (Ba71V).